Reading from the N-terminus, the 1232-residue chain is DNA-directed RNA polymerase subunit beta (1232 aa).

The tract at residues 1170 to 1232 (SVDEDADELE…LDLDDFGDEH (63 aa)) is disordered. Positions 1171 to 1180 (VDEDADELEV) are enriched in acidic residues. Residues 1189–1198 (PEEKEEKEKE) show a composition bias toward basic and acidic residues. The span at 1199 to 1232 (DSDEYDDLREEDVEPDLEELSLDDLDLDDFGDEH) shows a compositional bias: acidic residues.

It belongs to the RNA polymerase beta chain family. As to quaternary structure, the RNAP catalytic core consists of 2 alpha, 1 beta, 1 beta' and 1 omega subunit. When a sigma factor is associated with the core the holoenzyme is formed, which can initiate transcription.

It carries out the reaction RNA(n) + a ribonucleoside 5'-triphosphate = RNA(n+1) + diphosphate. DNA-dependent RNA polymerase catalyzes the transcription of DNA into RNA using the four ribonucleoside triphosphates as substrates. In Clostridium botulinum (strain Okra / Type B1), this protein is DNA-directed RNA polymerase subunit beta.